Reading from the N-terminus, the 110-residue chain is Protein YcgL (110 aa).

The 85-residue stretch at 14-98 folds into the YcgL domain; sequence MFCVIYRSSK…PPEDLLKQHL (85 aa). Positions 87-110 are disordered; that stretch reads PPPPEDLLKQHLSSVGQNTSPADR. The span at 97-110 shows a compositional bias: polar residues; that stretch reads HLSSVGQNTSPADR.

This chain is Protein YcgL, found in Salmonella choleraesuis (strain SC-B67).